Here is a 150-residue protein sequence, read N- to C-terminus: SPbeta prophage-derived uncharacterized protein YoqH (150 aa).

Residues 1-23 (MKRFILVLSFLSIIVAYPIQTNA) form the signal peptide.

The chain is SPbeta prophage-derived uncharacterized protein YoqH (yoqH) from Bacillus subtilis (strain 168).